A 343-amino-acid chain; its full sequence is Anthranilate phosphoribosyltransferase (343 aa).

5-phospho-alpha-D-ribose 1-diphosphate is bound by residues glycine 84, 87–88 (GD), threonine 92, 94–97 (NIST), 112–120 (KHGNRGVSS), and serine 124. Glycine 84 is an anthranilate binding site. Serine 96 serves as a coordination point for Mg(2+). Asparagine 115 is an anthranilate binding site. Position 170 (arginine 170) interacts with anthranilate. Aspartate 229 and glutamate 230 together coordinate Mg(2+).

This sequence belongs to the anthranilate phosphoribosyltransferase family. Homodimer. It depends on Mg(2+) as a cofactor.

The enzyme catalyses N-(5-phospho-beta-D-ribosyl)anthranilate + diphosphate = 5-phospho-alpha-D-ribose 1-diphosphate + anthranilate. It functions in the pathway amino-acid biosynthesis; L-tryptophan biosynthesis; L-tryptophan from chorismate: step 2/5. Functionally, catalyzes the transfer of the phosphoribosyl group of 5-phosphorylribose-1-pyrophosphate (PRPP) to anthranilate to yield N-(5'-phosphoribosyl)-anthranilate (PRA). The polypeptide is Anthranilate phosphoribosyltransferase (Burkholderia orbicola (strain AU 1054)).